A 1324-amino-acid chain; its full sequence is Tetratricopeptide repeat protein 21 homolog (1324 aa).

16 TPR repeats span residues 58-91, 414-446, 582-615, 669-702, 737-770, 772-804, 806-837, 847-880, 894-927, 929-961, 963-995, 997-1029, 1033-1066, 1205-1238, 1240-1272, and 1274-1307; these read PALAILKGVCLTLLGKIPDAIRHLETFVTDNDVA, SPLYYLIASVLAKQSKDKSFENFRQHIENLVEM, SLYHLIKSKTFKKRNENDEAIKTLKMALQIPRKE, DQLVIAQAQLYLTKGHVERALGILKKIQPGQSNF, PGSYSLLGDAFMKVQEPEDAINFYEQALKMQSKD, QLAEKIGEAYVMAHLYSKAVNFYESSMNIYKDK, MRLKLANLLLKLRNFEKCEKVLRAPFERDPEP, IQFLLLLAECHEMMDNVPEAMNDFEKAKSLHSRI, ARICNLQAELLYRRREFSQAVDICKQALAYHETD, KANLLLSKIFKEENKWTLVLQPCQTVIQVDPHN, EANSILADFYYIRSEAAHASTSYTTLLNTNPQH, HALSRVVELFCRNGEQNAAEKHLDRAKEVNPRC, SGYNVCRGRFEWYTGDQNEALRYYSRTKDSAAGW, EKCWLMLADIYINQNKNDQAVTFLDLVFKYNCNC, KAFELYGYMREKEQKYVEAYKMYEKAFMATKER, and PGFGYKLAFTYLKAKRLFACIETCQKVLDLNPQY.

This sequence belongs to the TTC21 family. As to quaternary structure, component of the IFT complex A (IFT-A) composed of at least che-11, daf-10, dyf-2, ift-139, ift-43 and ifta-1. Expressed in ciliated sensory neurons in the head and tail.

Its subcellular location is the cell projection. It localises to the cilium. The protein resides in the cytoplasm. It is found in the cytoskeleton. The protein localises to the cilium basal body. Its subcellular location is the dendrite. Its function is as follows. Component of the IFT complex A (IFT-A), a complex required for retrograde ciliary transport. In particular, may act redundantly with the intraflagellar transport protein ift-43 to regulate the transport of specific ciliary cargo proteins such as che-3 which are related to motility. Functions in cilia biogenesis. This chain is Tetratricopeptide repeat protein 21 homolog, found in Caenorhabditis elegans.